Reading from the N-terminus, the 516-residue chain is High-affinity nitrate transporter 2.3 (516 aa).

12 consecutive transmembrane segments (helical) span residues 52 to 72 (WFSF…LPLI), 76 to 96 (LGLT…GAVF), 112 to 132 (LASA…SIIQ), 142 to 162 (FFTG…SSMF), 172 to 192 (GVAG…MPLV), 209 to 229 (IAFF…LAFG), 265 to 285 (WILA…DNVV), 299 to 319 (TAGL…PGGG), 335 to 354 (LWGL…VLGI), 367 to 387 (VLFS…VPFV), 395 to 415 (ISGM…YIFF), and 425 to 445 (GIKY…LIYF). The interval 489 to 516 (SVREGGRSSANGGQPRHTVPVDASPAGV) is disordered.

Belongs to the major facilitator superfamily. Nitrate/nitrite porter (TC 2.A.1.8) family. As to quaternary structure, heterotetramer composed of two NRT2.3 and two NAR2.1. Isoform 1 interacts with NAR2.1, but not isoform 2. As to expression, expressed in the stelar cells of both primary and lateral roots, particularly at the site of lateral root emergence, root-shoot junction zone, vascular tissues of adventitious root primordia, leaves, germ tips and seed scutellum.

The protein localises to the cell membrane. Functionally, involved in nitrate transport, but does not seem to be able to mediate transport by its own. Acts as a dual component transporter with NAR2.1. Imports nitrate with high affinity when expressed with NAR2.1 in a heterologous system (Xenopus oocytes). Plays a key role in long-distance nitrate transport from root to shoot particularly at low external nitrate supply. This chain is High-affinity nitrate transporter 2.3 (NRT2.3), found in Oryza sativa subsp. japonica (Rice).